The primary structure comprises 744 residues: Cullin-1 (744 aa).

The 63-residue stretch at 674 to 736 folds into the Cullin neddylation domain; sequence DRRYAIDASI…RDYLERDKDN (63 aa).

This sequence belongs to the cullin family. As to quaternary structure, part of a SCF (SKP1-CUL1-F-box protein) E3 ubiquitin-protein ligase complex. Is able to form the SCF complex together with SKP1 and the rice black streaked dwarf virus RBSDV protein P7-2. Interacts with D3. Neddylated (rubylated). Deneddylation occurs upon interaction with the COP9 signalosome (CSN) complex. In terms of tissue distribution, expressed in dry seeds and coleoptiles.

Its function is as follows. Involved in ubiquitination and subsequent proteasomal degradation of target proteins. The polypeptide is Cullin-1 (Oryza sativa subsp. japonica (Rice)).